Consider the following 177-residue polypeptide: Sec-independent protein translocase protein TatB (177 aa).

Residues 1-21 (MFDFAWSEIAVIGVVALVVIG) form a helical membrane-spanning segment. A compositionally biased stretch (basic and acidic residues) spans 136-146 (REKTVSSETAR). Residues 136–177 (REKTVSSETARRAATAPAFIPPGEAFRSARRAPAFIPPADQG) form a disordered region.

It belongs to the TatB family. In terms of assembly, the Tat system comprises two distinct complexes: a TatABC complex, containing multiple copies of TatA, TatB and TatC subunits, and a separate TatA complex, containing only TatA subunits. Substrates initially bind to the TatABC complex, which probably triggers association of the separate TatA complex to form the active translocon.

Its subcellular location is the cell inner membrane. Functionally, part of the twin-arginine translocation (Tat) system that transports large folded proteins containing a characteristic twin-arginine motif in their signal peptide across membranes. Together with TatC, TatB is part of a receptor directly interacting with Tat signal peptides. TatB may form an oligomeric binding site that transiently accommodates folded Tat precursor proteins before their translocation. This is Sec-independent protein translocase protein TatB from Granulibacter bethesdensis (strain ATCC BAA-1260 / CGDNIH1).